The sequence spans 427 residues: Enolase (427 aa).

A (2R)-2-phosphoglycerate-binding site is contributed by Q163. The active-site Proton donor is E205. Residues D242, E285, and D312 each coordinate Mg(2+). 4 residues coordinate (2R)-2-phosphoglycerate: K337, R366, S367, and K388. Catalysis depends on K337, which acts as the Proton acceptor.

It belongs to the enolase family. Requires Mg(2+) as cofactor.

Its subcellular location is the cytoplasm. It is found in the secreted. The protein localises to the cell surface. It carries out the reaction (2R)-2-phosphoglycerate = phosphoenolpyruvate + H2O. The protein operates within carbohydrate degradation; glycolysis; pyruvate from D-glyceraldehyde 3-phosphate: step 4/5. Catalyzes the reversible conversion of 2-phosphoglycerate (2-PG) into phosphoenolpyruvate (PEP). It is essential for the degradation of carbohydrates via glycolysis. This Albidiferax ferrireducens (strain ATCC BAA-621 / DSM 15236 / T118) (Rhodoferax ferrireducens) protein is Enolase.